Reading from the N-terminus, the 139-residue chain is Small ribosomal subunit protein uS12 (139 aa).

The segment at 119 to 139 (GVDKRRQQRSAYGAKKPKPKS) is disordered.

This sequence belongs to the universal ribosomal protein uS12 family. As to quaternary structure, part of the 30S ribosomal subunit. Contacts proteins S8 and S17. May interact with IF1 in the 30S initiation complex.

With S4 and S5 plays an important role in translational accuracy. In terms of biological role, interacts with and stabilizes bases of the 16S rRNA that are involved in tRNA selection in the A site and with the mRNA backbone. Located at the interface of the 30S and 50S subunits, it traverses the body of the 30S subunit contacting proteins on the other side and probably holding the rRNA structure together. The combined cluster of proteins S8, S12 and S17 appears to hold together the shoulder and platform of the 30S subunit. The sequence is that of Small ribosomal subunit protein uS12 from Mycoplasma genitalium (strain ATCC 33530 / DSM 19775 / NCTC 10195 / G37) (Mycoplasmoides genitalium).